Here is a 77-residue protein sequence, read N- to C-terminus: Sec-independent protein translocase protein TatA (77 aa).

Residues 1–21 (MGSFSIWHWLVVLAIVVLVFG) form a helical membrane-spanning segment. The tract at residues 40–77 (KEGMKGAEEENTQPPPSHQQVTGHSIKSEIEEKDQTKV) is disordered. A compositionally biased stretch (basic and acidic residues) spans 65 to 77 (IKSEIEEKDQTKV).

It belongs to the TatA/E family. In terms of assembly, the Tat system comprises two distinct complexes: a TatABC complex, containing multiple copies of TatA, TatB and TatC subunits, and a separate TatA complex, containing only TatA subunits. Substrates initially bind to the TatABC complex, which probably triggers association of the separate TatA complex to form the active translocon.

Its subcellular location is the cell inner membrane. Part of the twin-arginine translocation (Tat) system that transports large folded proteins containing a characteristic twin-arginine motif in their signal peptide across membranes. TatA could form the protein-conducting channel of the Tat system. The chain is Sec-independent protein translocase protein TatA from Nitrosomonas eutropha (strain DSM 101675 / C91 / Nm57).